Here is a 310-residue protein sequence, read N- to C-terminus: Keratin, type II cytoskeletal 8 (310 aa).

Residues 1–38 (QRTLKVSSSGPRSFSSRSFSSGPSSRISSSSYSRVGSN) form a disordered region. Residue Lys5 forms a Glycyl lysine isopeptide (Lys-Gly) (interchain with G-Cter in SUMO2) linkage. Residues Ser7, Ser9, Ser15, and Ser16 each carry the phosphoserine modification. A compositionally biased stretch (low complexity) spans 7 to 38 (SSSGPRSFSSRSFSSGPSSRISSSSYSRVGSN). Position 17 is an omega-N-methylarginine (Arg17). A phosphoserine mark is found at Ser18, Ser21, and Ser25. Residue Arg26 is modified to Omega-N-methylarginine. 3 positions are modified to phosphoserine: Ser28, Ser31, and Ser33. Arg34 is subject to Omega-N-methylarginine. Ser37 carries the phosphoserine modification. Arg42 carries the post-translational modification Asymmetric dimethylarginine; alternate. Arg42 is subject to Omega-N-methylarginine; alternate. Positions 92–127 (EKEQIKTLNNKFASFIDKVRFLEQQNKILETKWSFL) are coil 1A. The IF rod domain occupies 92-310 (EKEQIKTLNN…LRHTKTEISE (219 aa)). Lys102 is modified (N6-malonyllysine). Residues Lys123 and Lys131 each participate in a glycyl lysine isopeptide (Lys-Gly) (interchain with G-Cter in SUMO2) cross-link. The segment at 128–144 (QQQKTSQSNLDGLFEKY) is linker 1. Residues 145 to 236 (ITNLRRQLDS…HLYEEEIKEM (92 aa)) are coil 1B. Lys198 participates in a covalent cross-link: Glycyl lysine isopeptide (Lys-Gly) (interchain with G-Cter in SUMO1); alternate. Lys198 is covalently cross-linked (Glycyl lysine isopeptide (Lys-Gly) (interchain with G-Cter in SUMO2); alternate). Lys208 carries the N6-acetyllysine modification. Position 229 is a phosphotyrosine (Tyr229). The tract at residues 237-260 (QSQISDTSVVVSMDNSRSLDLDGI) is linker 12. A phosphoserine mark is found at Ser254 and Ser275. Residues 261-310 (IADVRAQYEEIANRSRAEAETMYQIKYEELQLLAGKHGDDLRHTKTEISE) form a coil 2 region. A Glycyl lysine isopeptide (Lys-Gly) (interchain with G-Cter in SUMO2) cross-link involves residue Lys286. Lys296 is covalently cross-linked (Glycyl lysine isopeptide (Lys-Gly) (interchain with G-Cter in SUMO2); alternate). At Lys296 the chain carries N6-acetyllysine; alternate. Residue Lys305 forms a Glycyl lysine isopeptide (Lys-Gly) (interchain with G-Cter in SUMO2) linkage.

This sequence belongs to the intermediate filament family. In terms of assembly, heterotetramer of two type I and two type II keratins. Forms a heterodimer with KRT18. Associates with KRT20. Interacts with PNN. When associated with KRT19, interacts with DMD. Interacts with APEX1. Interacts with GPER1. Interacts with EPPK1. Interacts with PKP1 and PKP2. O-glycosylated. O-GlcNAcylation at multiple sites increases solubility, and decreases stability by inducing proteasomal degradation. Post-translationally, O-glycosylated (O-GlcNAcylated), in a cell cycle-dependent manner.

It localises to the cytoplasm. The protein resides in the nucleus. It is found in the nucleoplasm. Its subcellular location is the nucleus matrix. Together with KRT19, helps to link the contractile apparatus to dystrophin at the costameres of striated muscle. In Potorous tridactylus (Potoroo), this protein is Keratin, type II cytoskeletal 8.